Reading from the N-terminus, the 1007-residue chain is RNA-binding protein 26 (1007 aa).

Lysine 94 participates in a covalent cross-link: Glycyl lysine isopeptide (Lys-Gly) (interchain with G-Cter in SUMO2). Lysine 106 is covalently cross-linked (Glycyl lysine isopeptide (Lys-Gly) (interchain with G-Cter in SUMO1); alternate). Lysine 106 participates in a covalent cross-link: Glycyl lysine isopeptide (Lys-Gly) (interchain with G-Cter in SUMO2); alternate. A compositionally biased stretch (basic and acidic residues) spans 106-118 (KKEEITKEEEREK). The tract at residues 106-241 (KKEEITKEEE…YTPVSSVPSI (136 aa)) is disordered. Serine 127 carries the phosphoserine modification. Residues 134 to 168 (RYRENRSRDERKKDDRSRKRDYDRNPPRRDSYRDR) are compositionally biased toward basic and acidic residues. The segment covering 169 to 186 (YNRRRGRSRSYSRSRSRS) has biased composition (basic residues). 2 stretches are compositionally biased toward basic and acidic residues: residues 187–201 (WSKE…DRSR) and 209–227 (RSRE…RTDP). Polar residues predominate over residues 228–241 (LENNYTPVSSVPSI). A C3H1-type zinc finger spans residues 288–316 (PMPKKRCRDYDEKGFCMRGDMCPFDHGSD). The span at 334-388 (QPPVVEGPPPPGLPPPPPILTPPPVNLRPPVPPPGPLPPSLPPVTGPPPPLPPLQ) shows a compositional bias: pro residues. Disordered regions lie at residues 334 to 404 (QPPV…SSVP) and 460 to 519 (IGLT…TNSP). Low complexity predominate over residues 394 to 404 (APPNSATSSVP). Residue serine 496 is modified to Phosphoserine. Lysine 510 is modified (N6-acetyllysine). At serine 518 the chain carries Phosphoserine. An RRM 1 domain is found at 532 to 606 (TKLELRKVPP…RFIKVYWHRE (75 aa)). The residue at position 616 (serine 616) is a Phosphoserine. 2 coiled-coil regions span residues 719-795 (DNNE…KAAS) and 823-847 (KKMQ…EAAK). The tract at residues 853 to 884 (SGRGRGIHSRGRGAVHGRGRGRGRGRGVPGHA) is disordered. A compositionally biased stretch (basic residues) spans 857 to 877 (RGIHSRGRGAVHGRGRGRGRG). The RRM 2 domain occupies 891-960 (RALEISAFTE…QDLKLAWNKP (70 aa)). Residues 966–1007 (AVETEEVEPDEEEFQEESLVDDSLLQDDDEEEEDNESRSWRR) form a disordered region. The segment covering 968–1000 (ETEEVEPDEEEFQEESLVDDSLLQDDDEEEEDN) has biased composition (acidic residues).

May be involved in the turnover of nuclear polyadenylated (pA+) RNA. This chain is RNA-binding protein 26, found in Homo sapiens (Human).